We begin with the raw amino-acid sequence, 1161 residues long: Type IV pilus biogenesis factor PilY1 (1161 aa).

An N-terminal signal peptide occupies residues 1–30 (MKSVLHQIGKTSLAAALSGAVLLSAQTTHA). Residues Asp598, Asp600, Asn602, and Asp606 each contribute to the Ca(2+) site. The interval 617–619 (RGD) is integrin-binding motif RGD. Ca(2+) is bound by residues Asp849, Asn851, Asp853, Val855, and Asp857. Residues 1136 to 1161 (SGECLTVNPGPNTRGRQNWRPIEGKN) form a disordered region.

Belongs to the PilY1 family. Interacts (via C-terminus) with host integrins alpha-V/beta-3 (ITGAV/ITGB3) and alpha-V/beta-5 (ITGAV/ITGB5).

It localises to the fimbrium. The protein localises to the membrane. Its subcellular location is the cytoplasm. It is found in the cytosol. Involved in pilus assembly, twitching motility and adhesion to host cells. Primes type IV pili (T4P) assembly and is required for inclusion of minor pilins PilV, PilW and PilX to the surface pili. Stabilizes assembled pilus fibers likely by antagonizing retraction mediated by PilT. Calcium-binding and calcium release by PilY1 seem to be essential for twitching motility and for regulation of pilus retraction dynamics of PilT. This chain is Type IV pilus biogenesis factor PilY1, found in Pseudomonas aeruginosa (strain ATCC 15692 / DSM 22644 / CIP 104116 / JCM 14847 / LMG 12228 / 1C / PRS 101 / PAO1).